We begin with the raw amino-acid sequence, 431 residues long: Bifunctional protein GlmU (431 aa).

The tract at residues M1–K223 is pyrophosphorylase. UDP-N-acetyl-alpha-D-glucosamine-binding positions include L8 to G11, K22, Q74, and G81 to T82. Residue D102 coordinates Mg(2+). The UDP-N-acetyl-alpha-D-glucosamine site is built by G135, E149, N164, and N221. Position 221 (N221) interacts with Mg(2+). The interval A224–E244 is linker. Positions G245–K431 are N-acetyltransferase. UDP-N-acetyl-alpha-D-glucosamine is bound by residues R308 and K325. Catalysis depends on H336, which acts as the Proton acceptor. Residues Y339 and N350 each contribute to the UDP-N-acetyl-alpha-D-glucosamine site. Acetyl-CoA contacts are provided by residues A353, N359–Y360, S378, A396, and R413.

It in the N-terminal section; belongs to the N-acetylglucosamine-1-phosphate uridyltransferase family. In the C-terminal section; belongs to the transferase hexapeptide repeat family. As to quaternary structure, homotrimer. The cofactor is Mg(2+).

The protein localises to the cytoplasm. The enzyme catalyses alpha-D-glucosamine 1-phosphate + acetyl-CoA = N-acetyl-alpha-D-glucosamine 1-phosphate + CoA + H(+). The catalysed reaction is N-acetyl-alpha-D-glucosamine 1-phosphate + UTP + H(+) = UDP-N-acetyl-alpha-D-glucosamine + diphosphate. It participates in nucleotide-sugar biosynthesis; UDP-N-acetyl-alpha-D-glucosamine biosynthesis; N-acetyl-alpha-D-glucosamine 1-phosphate from alpha-D-glucosamine 6-phosphate (route II): step 2/2. Its pathway is nucleotide-sugar biosynthesis; UDP-N-acetyl-alpha-D-glucosamine biosynthesis; UDP-N-acetyl-alpha-D-glucosamine from N-acetyl-alpha-D-glucosamine 1-phosphate: step 1/1. It functions in the pathway bacterial outer membrane biogenesis; LPS lipid A biosynthesis. In terms of biological role, catalyzes the last two sequential reactions in the de novo biosynthetic pathway for UDP-N-acetylglucosamine (UDP-GlcNAc). The C-terminal domain catalyzes the transfer of acetyl group from acetyl coenzyme A to glucosamine-1-phosphate (GlcN-1-P) to produce N-acetylglucosamine-1-phosphate (GlcNAc-1-P), which is converted into UDP-GlcNAc by the transfer of uridine 5-monophosphate (from uridine 5-triphosphate), a reaction catalyzed by the N-terminal domain. The chain is Bifunctional protein GlmU from Wolinella succinogenes (strain ATCC 29543 / DSM 1740 / CCUG 13145 / JCM 31913 / LMG 7466 / NCTC 11488 / FDC 602W) (Vibrio succinogenes).